The primary structure comprises 302 residues: AT-hook motif nuclear-localized protein 29 (302 aa).

The interval 1-95 (MDGGYDQSGG…KPPVIVTRDS (95 aa)) is disordered. Over residues 32–44 (QLHPLPQPQPQPQ) the composition is skewed to pro residues. The segment at residues 72 to 84 (KRPRGRPPGSKNK) is a DNA-binding region (a.T hook). In terms of domain architecture, PPC spans 96-241 (PNVLRSHVLE…DEGGEGGEGG (146 aa)). Residues 164–169 (GRFEIL) are required for the binding to non-AHL interactors. The segment at 229-279 (PLEDEGGEGGEGGEVGEGGGGEGGPPPATSSSPPSGAGQGQLRGNMSGYDQ) is disordered. Residues 237–251 (GGEGGEVGEGGGGEG) are compositionally biased toward gly residues.

In terms of assembly, homodimer. Interacts with AHL5, AHL12, AHL25, AHL27, TCP4, TCP13 and EF114. As to expression, expressed in the hypocotyl and the vascular tissue of seedling.

It is found in the nucleus. Transcription factor that specifically binds AT-rich DNA sequences related to the nuclear matrix attachment regions (MARs). Acts redundantly with AHL18, AHL22 and AHL27 in the regulation of flowering and regulation of the hypocotyl elongation. Acts redundantly with AHL27/ESC to modulate hypocotyl growth inhibition in response to light. The sequence is that of AT-hook motif nuclear-localized protein 29 from Arabidopsis thaliana (Mouse-ear cress).